Here is a 359-residue protein sequence, read N- to C-terminus: Histidinol-phosphate aminotransferase (359 aa).

Lys217 is modified (N6-(pyridoxal phosphate)lysine).

The protein belongs to the class-II pyridoxal-phosphate-dependent aminotransferase family. Histidinol-phosphate aminotransferase subfamily. As to quaternary structure, homodimer. The cofactor is pyridoxal 5'-phosphate.

The enzyme catalyses L-histidinol phosphate + 2-oxoglutarate = 3-(imidazol-4-yl)-2-oxopropyl phosphate + L-glutamate. Its pathway is amino-acid biosynthesis; L-histidine biosynthesis; L-histidine from 5-phospho-alpha-D-ribose 1-diphosphate: step 7/9. This Salmonella newport (strain SL254) protein is Histidinol-phosphate aminotransferase.